We begin with the raw amino-acid sequence, 361 residues long: tRNA(Ile)-lysidine synthase (361 aa).

32–37 lines the ATP pocket; sequence SGGPDS.

It belongs to the tRNA(Ile)-lysidine synthase family.

The protein localises to the cytoplasm. The catalysed reaction is cytidine(34) in tRNA(Ile2) + L-lysine + ATP = lysidine(34) in tRNA(Ile2) + AMP + diphosphate + H(+). Functionally, ligates lysine onto the cytidine present at position 34 of the AUA codon-specific tRNA(Ile) that contains the anticodon CAU, in an ATP-dependent manner. Cytidine is converted to lysidine, thus changing the amino acid specificity of the tRNA from methionine to isoleucine. The chain is tRNA(Ile)-lysidine synthase from Bradyrhizobium diazoefficiens (strain JCM 10833 / BCRC 13528 / IAM 13628 / NBRC 14792 / USDA 110).